Here is a 211-residue protein sequence, read N- to C-terminus: Large ribosomal subunit protein bL25 (211 aa).

The interval 188–211 is disordered; it reads HREEEKAPEETGEAAPAPTPETGQ. The segment covering 200 to 211 has biased composition (low complexity); that stretch reads EAAPAPTPETGQ.

This sequence belongs to the bacterial ribosomal protein bL25 family. CTC subfamily. Part of the 50S ribosomal subunit; part of the 5S rRNA/L5/L18/L25 subcomplex. Contacts the 5S rRNA. Binds to the 5S rRNA independently of L5 and L18.

This is one of the proteins that binds to the 5S RNA in the ribosome where it forms part of the central protuberance. This chain is Large ribosomal subunit protein bL25, found in Desulforudis audaxviator (strain MP104C).